Reading from the N-terminus, the 389-residue chain is Large envelope protein (389 aa).

Met-1 carries the N-acetylmethionine modification. A lipid anchor (N-myristoyl glycine; by host) is attached at Gly-2. The interval 2–108 (GTNLSVPNPL…PPLRDSHPQA (107 aa)) is pre-S1. A pre-S region spans residues 2–163 (GTNLSVPNPL…FSRTGDPAPN (162 aa)). Over 2-170 (GTNLSVPNPL…APNMESTTSG (169 aa)) the chain is Virion surface; in external conformation. Topologically, residues 2–242 (GTNLSVPNPL…PGYRWMCLRR (241 aa)) are intravirion; in internal conformation. The segment at 74–105 (LTTVPAAPPPASTNRQSGRQPTPISPPLRDSH) is disordered. Residues 85–95 (STNRQSGRQPT) are compositionally biased toward polar residues. The pre-S2 stretch occupies residues 109–163 (MQWNSTTFHQALLDPRVRGLYFPAGGSSSGTVNPVPTIVSPISSIFSRTGDPAPN). The helical transmembrane segment at 171 to 191 (FLGPLLVLQAGFFLLTRILTI) threads the bilayer. Residues 192–242 (PQSLDSWWTSLNFLGEAPTCPGQNSQSPTSNHSPTSCPPICPGYRWMCLRR) lie on the Intravirion; in external conformation side of the membrane. A helical membrane pass occupies residues 243 to 263 (FIIFLFILLLCLIFLLVLLDY). The Virion surface segment spans residues 264–337 (QGMLPVCPLL…WASVRFSWLS (74 aa)). The N-linked (GlcNAc...) asparagine; by host glycan is linked to Asn-309. A helical transmembrane segment spans residues 338–358 (LLVPFVQWFAGLSPTVWLSVI). At 359–364 (WMMWYW) the chain is on the intravirion side. A helical membrane pass occupies residues 365 to 387 (GPSLYNILSPFLPLLPIFFCLWV). The Virion surface portion of the chain corresponds to 388–389 (YI).

Belongs to the orthohepadnavirus major surface antigen family. As to quaternary structure, in its internal form (Li-HBsAg), interacts with the capsid protein and with the isoform S. Interacts with host chaperone CANX. Associates with host chaperone CANX through its pre-S2 N glycan; this association may be essential for isoform M proper secretion. In terms of assembly, interacts with isoform L. Interacts with the antigens of satellite virus HDV (HDVAgs); this interaction is required for encapsidation of HDV genomic RNA. Isoform M is N-terminally acetylated by host at a ratio of 90%, and N-glycosylated by host at the pre-S2 region. Post-translationally, myristoylated.

It is found in the virion membrane. In terms of biological role, the large envelope protein exists in two topological conformations, one which is termed 'external' or Le-HBsAg and the other 'internal' or Li-HBsAg. In its external conformation the protein attaches the virus to cell receptors and thereby initiating infection. This interaction determines the species specificity and liver tropism. This attachment induces virion internalization predominantly through caveolin-mediated endocytosis. The large envelope protein also assures fusion between virion membrane and endosomal membrane. In its internal conformation the protein plays a role in virion morphogenesis and mediates the contact with the nucleocapsid like a matrix protein. Functionally, the middle envelope protein plays an important role in the budding of the virion. It is involved in the induction of budding in a nucleocapsid independent way. In this process the majority of envelope proteins bud to form subviral lipoprotein particles of 22 nm of diameter that do not contain a nucleocapsid. The protein is Large envelope protein of Hepatitis B virus genotype C subtype adr (isolate Japan/A4/1994) (HBV-C).